Consider the following 265-residue polypeptide: MRFTVTSRGDDVSNTLQQKIKRYLLDFGLTLDEQEPDIVITVGGDGTLLHAFHRYTSRLEDTAFVGIHTGHLGFYADWVPDEVEKLVIHIAKTPYQIVEYPLLEVVVRHTDESESKRLLALNECTVKSQEGSLVSNVEIKGDVFEVFRGDGLCISTPSGSTAYNKALGGAILHPSLASIQISEMASINNRVYRTIGSPLVLPQHHTCLIKPLNQVELQVTIDHFTLAYKRVKSIQCRVAEEKIRFARFRPFPFWKRVKESFIGDS.

Residue Asp-45 is the Proton acceptor of the active site. NAD(+) is bound by residues 45–46 (DG), His-50, 122–123 (NE), Arg-148, Asp-150, and Ala-185.

The protein belongs to the NAD kinase family. The cofactor is a divalent metal cation.

The protein resides in the cytoplasm. It catalyses the reaction NAD(+) + ATP = ADP + NADP(+) + H(+). Functionally, involved in the regulation of the intracellular balance of NAD and NADP, and is a key enzyme in the biosynthesis of NADP. Catalyzes specifically the phosphorylation on 2'-hydroxyl of the adenosine moiety of NAD to yield NADP. This chain is NAD kinase 1, found in Halalkalibacterium halodurans (strain ATCC BAA-125 / DSM 18197 / FERM 7344 / JCM 9153 / C-125) (Bacillus halodurans).